Consider the following 160-residue polypeptide: Transcriptional repressor NrdR (160 aa).

A zinc finger lies at 3–34; sequence CPFCGAEDTSVVDSRVSEEGSRIRRRRQCTAC. The ATP-cone domain occupies 49 to 139; that stretch reads PQIIKQGGNR…VYRSFEDVGD (91 aa).

This sequence belongs to the NrdR family. Requires Zn(2+) as cofactor.

Its function is as follows. Negatively regulates transcription of bacterial ribonucleotide reductase nrd genes and operons by binding to NrdR-boxes. The chain is Transcriptional repressor NrdR from Nitrosomonas eutropha (strain DSM 101675 / C91 / Nm57).